The chain runs to 537 residues: Formimidoyltransferase-cyclodeaminase (537 aa).

The formiminotransferase N-subdomain stretch occupies residues 1-181 (MNKLVECVPN…GASVTGARSF (181 aa)). The active-site For formimidoyltransferase activity is His82. 163–172 (GPAKFIPSYG) provides a ligand contact to folate. A formiminotransferase C-subdomain region spans residues 182 to 326 (LIAYNVNILG…PKKRIIDYMV (145 aa)). Residues 327–335 (QEDLKVTQP) are linker. The cyclodeaminase/cyclohydrolase stretch occupies residues 336–537 (LASMSVRGFV…VLEILSNRKE (202 aa)). Asp413 serves as the catalytic For cyclodeaminase activity.

This sequence in the C-terminal section; belongs to the cyclodeaminase/cyclohydrolase family. It in the N-terminal section; belongs to the formiminotransferase family. Homooctamer, including four polyglutamate binding sites. The subunits are arranged as a tetramer of dimers, and form a planar ring-shaped structure.

It is found in the cytoplasm. It localises to the cytosol. The protein resides in the golgi apparatus. Its subcellular location is the cytoskeleton. The protein localises to the microtubule organizing center. It is found in the centrosome. It localises to the centriole. It catalyses the reaction 5-formimidoyltetrahydrofolate + L-glutamate = N-formimidoyl-L-glutamate + (6S)-5,6,7,8-tetrahydrofolate. The enzyme catalyses 5-formimidoyltetrahydrofolate + 2 H(+) = (6R)-5,10-methenyltetrahydrofolate + NH4(+). It functions in the pathway amino-acid degradation; L-histidine degradation into L-glutamate; L-glutamate from N-formimidoyl-L-glutamate (transferase route): step 1/1. Folate-dependent enzyme, that displays both transferase and deaminase activity. Serves to channel one-carbon units from formiminoglutamate to the folate pool. In Dictyostelium discoideum (Social amoeba), this protein is Formimidoyltransferase-cyclodeaminase (ftcd).